The primary structure comprises 213 residues: Probable nicotinate-nucleotide adenylyltransferase (213 aa).

The protein belongs to the NadD family.

It carries out the reaction nicotinate beta-D-ribonucleotide + ATP + H(+) = deamido-NAD(+) + diphosphate. It participates in cofactor biosynthesis; NAD(+) biosynthesis; deamido-NAD(+) from nicotinate D-ribonucleotide: step 1/1. Functionally, catalyzes the reversible adenylation of nicotinate mononucleotide (NaMN) to nicotinic acid adenine dinucleotide (NaAD). The sequence is that of Probable nicotinate-nucleotide adenylyltransferase from Escherichia coli O139:H28 (strain E24377A / ETEC).